A 492-amino-acid chain; its full sequence is Solute carrier family 2, facilitated glucose transporter member 1 (492 aa).

M1 bears the N-acetylmethionine mark. Topologically, residues 1 to 11 (MEPSSKKLTGR) are cytoplasmic. A helical transmembrane segment spans residues 12 to 33 (LMLAVGGAVLGSLQFGYNTGVI). The Extracellular portion of the chain corresponds to 34–66 (NAPQKVIEEFYNQTWLHRYGESISPATLTTLWS). An N-linked (GlcNAc...) asparagine glycan is attached at N45. The chain crosses the membrane as a helical span at residues 67–87 (LSVAIFSVGGMIGSFSVGLFV). Residues 88-90 (NRF) lie on the Cytoplasmic side of the membrane. A helical membrane pass occupies residues 91–112 (GRRNSMLMMNLLAFISAVLMGF). Topologically, residues 113–120 (SKLGKSFE) are extracellular. The helical transmembrane segment at 121 to 144 (MLILGRFIIGVYCGLTTGFVPMYV) threads the bilayer. Residues 145–155 (GEVSPTALRGA) lie on the Cytoplasmic side of the membrane. Residues 156-176 (LGTLHQLGIVVGILIAQVFGL) form a helical membrane-spanning segment. Position 161 (Q161) interacts with D-glucose. At 177-185 (DSIMGNEEL) the chain is on the extracellular side. The chain crosses the membrane as a helical span at residues 186–206 (WPLLLSVIFIPALLQCVLLPF). The Cytoplasmic segment spans residues 207–271 (CPESPRFLLI…LFRSAAYRQP (65 aa)). S226 carries the phosphoserine modification. The helical transmembrane segment at 272 to 293 (ILIAVVLQLSQQLSGINAVFYY) threads the bilayer. D-glucose-binding positions include 282–283 (QQ) and N288. Residues 294 to 306 (STSIFEKAGVQQP) are Extracellular-facing. A helical membrane pass occupies residues 307–328 (VYATIGSGIVNTAFTVVSLFVV). N317 serves as a coordination point for D-glucose. Residues 329-334 (ERAGRR) lie on the Cytoplasmic side of the membrane. A helical membrane pass occupies residues 335–355 (TLHLIGLAGMAGCAVLMTIAL). Residues 356–365 (ALLEQLPWMS) are Extracellular-facing. A helical transmembrane segment spans residues 366-388 (YLSIVAIFGFVAFFEVGPGPIPW). The D-glucose site is built by E380 and W388. Topologically, residues 389–401 (FIVAELFSQGPRP) are cytoplasmic. A helical transmembrane segment spans residues 402-422 (AAIAVAGFSNWTSNFIVGMCF). Residues 423–429 (QYVEQLC) are Extracellular-facing. A helical membrane pass occupies residues 430–450 (GPYVFIIFTVLLVLFFIFTYF). S465 carries the post-translational modification Phosphoserine. The disordered stretch occupies residues 468–492 (RQGGASQSDKTPEELFHPLGADSQV). T478 bears the Phosphothreonine mark. The residue at position 490 (S490) is a Phosphoserine.

This sequence belongs to the major facilitator superfamily. Sugar transporter (TC 2.A.1.1) family. Glucose transporter subfamily. In terms of assembly, found in a complex with ADD2, DMTN and SLC2A1. Interacts (via C-terminus cytoplasmic region) with DMTN. Interacts with SNX27; the interaction is required when endocytosed to prevent degradation in lysosomes and promote recycling to the plasma membrane. Interacts with GIPC (via PDZ domain). Interacts with STOM. Interacts with SGTA (via Gln-rich region). Interacts with BSG. Interacts with SMIM43; the interaction may promote SLC2A1-mediated glucose transport to meet the energy needs of mesendoderm differentiation. In terms of processing, phosphorylation at Ser-226 by PKC promotes glucose uptake by increasing cell membrane localization.

It localises to the cell membrane. The protein resides in the photoreceptor inner segment. It carries out the reaction D-glucose(out) = D-glucose(in). With respect to regulation, the uptake of glucose is inhibited by cytochalasin B. Glucose uptake is increased in response to phorbol ester 12-O-tetradecanoylphorbol-13-acetate (TPA) treatment: TPA-induced glucose uptake requires phosphorylation at Ser-226. In terms of biological role, facilitative glucose transporter, which is responsible for constitutive or basal glucose uptake. Has a very broad substrate specificity; can transport a wide range of aldoses including both pentoses and hexoses. Most important energy carrier of the brain: present at the blood-brain barrier and assures the energy-independent, facilitative transport of glucose into the brain. In association with BSG and NXNL1, promotes retinal cone survival by increasing glucose uptake into photoreceptors. Required for mesendoderm differentiation. This chain is Solute carrier family 2, facilitated glucose transporter member 1, found in Sus scrofa (Pig).